A 95-amino-acid chain; its full sequence is Heteroscorpine-1 (95 aa).

The first 19 residues, 1 to 19, serve as a signal peptide directing secretion; the sequence is MNSKLTALIFLGLVAIASC. The BetaSPN-type CS-alpha/beta domain maps to 55–95; that stretch reads EFQCVANIDTMGNCETHCQKTSGEKGFCHGTKCKCGKPLSY. 3 disulfides stabilise this stretch: cysteine 58–cysteine 82, cysteine 68–cysteine 87, and cysteine 72–cysteine 89.

This sequence belongs to the long chain scorpion toxin family. Class 3 subfamily. Contains 3 disulfide bonds. Expressed by the venom gland.

The protein resides in the secreted. Functionally, has antibacterial activity against B.subtilis, K.pneumoniae and P.aeruginosa. The chain is Heteroscorpine-1 from Heterometrus laoticus (Thai giant scorpion).